A 155-amino-acid polypeptide reads, in one-letter code: Probable ribosome biogenesis protein RLP24 (155 aa).

Belongs to the eukaryotic ribosomal protein eL24 family.

This chain is Probable ribosome biogenesis protein RLP24 (RPL24), found in Encephalitozoon cuniculi (strain GB-M1) (Microsporidian parasite).